We begin with the raw amino-acid sequence, 195 residues long: MDVKIGVLALQGDVAEHITAFQQVLDTIPSVVGSVVEVREAAQIPSLDAIAIPGGESTTISRLIEKNRMHEVLTGFQGGIFATCAGMVLMAKSVEDPRICPLGLIDMEVDRNAFGRQRESFEADIPVQGLDAPFHAVFIRAPVVRSVGAEATVLATIDQGIVAVLQGKHMALSFHPELAGDLRLHRLFLTGLGIV.

Position 55-57 (55-57) interacts with L-glutamine; that stretch reads GES. Cys-84 (nucleophile) is an active-site residue. Residues Arg-111 and 139-140 each bind L-glutamine; that span reads IR. Active-site charge relay system residues include His-175 and Glu-177.

This sequence belongs to the glutaminase PdxT/SNO family. As to quaternary structure, in the presence of PdxS, forms a dodecamer of heterodimers. Only shows activity in the heterodimer.

The catalysed reaction is aldehydo-D-ribose 5-phosphate + D-glyceraldehyde 3-phosphate + L-glutamine = pyridoxal 5'-phosphate + L-glutamate + phosphate + 3 H2O + H(+). It catalyses the reaction L-glutamine + H2O = L-glutamate + NH4(+). It participates in cofactor biosynthesis; pyridoxal 5'-phosphate biosynthesis. In terms of biological role, catalyzes the hydrolysis of glutamine to glutamate and ammonia as part of the biosynthesis of pyridoxal 5'-phosphate. The resulting ammonia molecule is channeled to the active site of PdxS. The chain is Pyridoxal 5'-phosphate synthase subunit PdxT from Methanosphaerula palustris (strain ATCC BAA-1556 / DSM 19958 / E1-9c).